The sequence spans 120 residues: Large ribosomal subunit protein uL24 (120 aa).

Residues 1-26 form a disordered region; the sequence is MVRVISSQPRKQRKARYNAPHHMRGS. Over residues 10–24 the composition is skewed to basic residues; the sequence is RKQRKARYNAPHHMR.

This sequence belongs to the universal ribosomal protein uL24 family. In terms of assembly, part of the 50S ribosomal subunit.

Functionally, one of two assembly initiator proteins, it binds directly to the 5'-end of the 23S rRNA, where it nucleates assembly of the 50S subunit. In terms of biological role, located at the polypeptide exit tunnel on the outside of the subunit. This is Large ribosomal subunit protein uL24 from Methanospirillum hungatei JF-1 (strain ATCC 27890 / DSM 864 / NBRC 100397 / JF-1).